The chain runs to 505 residues: ATP synthase subunit beta, mitochondrial (505 aa).

Residue 184-191 (GGAGVGKT) participates in ATP binding.

The protein belongs to the ATPase alpha/beta chains family. In terms of assembly, F-type ATPases have 2 components, CF(1) - the catalytic core - and CF(0) - the membrane proton channel. CF(1) has five subunits: alpha(3), beta(3), gamma(1), delta(1), epsilon(1). CF(0) has three main subunits: a, b and c.

It localises to the mitochondrion. The protein localises to the mitochondrion inner membrane. The catalysed reaction is ATP + H2O + 4 H(+)(in) = ADP + phosphate + 5 H(+)(out). Its function is as follows. Mitochondrial membrane ATP synthase (F(1)F(0) ATP synthase or Complex V) produces ATP from ADP in the presence of a proton gradient across the membrane which is generated by electron transport complexes of the respiratory chain. F-type ATPases consist of two structural domains, F(1) - containing the extramembraneous catalytic core, and F(0) - containing the membrane proton channel, linked together by a central stalk and a peripheral stalk. During catalysis, ATP synthesis in the catalytic domain of F(1) is coupled via a rotary mechanism of the central stalk subunits to proton translocation. Subunits alpha and beta form the catalytic core in F(1). Rotation of the central stalk against the surrounding alpha(3)beta(3) subunits leads to hydrolysis of ATP in three separate catalytic sites on the beta subunits. The sequence is that of ATP synthase subunit beta, mitochondrial (ATP2) from Kluyveromyces lactis (strain ATCC 8585 / CBS 2359 / DSM 70799 / NBRC 1267 / NRRL Y-1140 / WM37) (Yeast).